The chain runs to 321 residues: GDP-L-fucose synthase (321 aa).

14 to 20 (GGSGLVG) contributes to the NADP(+) binding site. The Proton donor/acceptor role is filled by Y143. NADP(+) contacts are provided by residues K147, 170-173 (PTNV), and H186. The substrate site is built by K194, W208, R215, and D277.

This sequence belongs to the NAD(P)-dependent epimerase/dehydratase family. Fucose synthase subfamily. As to quaternary structure, homodimer.

The catalysed reaction is GDP-beta-L-fucose + NADP(+) = GDP-4-dehydro-alpha-D-rhamnose + NADPH + H(+). It participates in nucleotide-sugar biosynthesis; GDP-L-fucose biosynthesis via de novo pathway; GDP-L-fucose from GDP-alpha-D-mannose: step 2/2. Catalyzes the two-step NADP-dependent conversion of GDP-4-dehydro-6-deoxy-D-mannose to GDP-fucose, involving an epimerase and a reductase reaction. This is GDP-L-fucose synthase from Homo sapiens (Human).